We begin with the raw amino-acid sequence, 649 residues long: 1-deoxy-D-xylulose-5-phosphate synthase 1 (649 aa).

Thiamine diphosphate is bound by residues histidine 73 and 113–115 (SHA). Aspartate 144 contributes to the Mg(2+) binding site. Thiamine diphosphate-binding positions include 145 to 146 (GA), asparagine 174, tyrosine 285, and glutamate 367. Asparagine 174 contributes to the Mg(2+) binding site. The interval 623 to 649 (LLPGTGTRPGAQEYRPRMPLTDWSEPA) is disordered.

This sequence belongs to the transketolase family. DXPS subfamily. Homodimer. It depends on Mg(2+) as a cofactor. Thiamine diphosphate serves as cofactor.

The catalysed reaction is D-glyceraldehyde 3-phosphate + pyruvate + H(+) = 1-deoxy-D-xylulose 5-phosphate + CO2. The protein operates within metabolic intermediate biosynthesis; 1-deoxy-D-xylulose 5-phosphate biosynthesis; 1-deoxy-D-xylulose 5-phosphate from D-glyceraldehyde 3-phosphate and pyruvate: step 1/1. Functionally, catalyzes the acyloin condensation reaction between C atoms 2 and 3 of pyruvate and glyceraldehyde 3-phosphate to yield 1-deoxy-D-xylulose-5-phosphate (DXP). The polypeptide is 1-deoxy-D-xylulose-5-phosphate synthase 1 (Kitasatospora griseola (Streptomyces griseolosporeus)).